The following is a 424-amino-acid chain: UPF0415 protein C7orf25 homolog (424 aa).

It belongs to the UPF0415 family.

In Xenopus laevis (African clawed frog), this protein is UPF0415 protein C7orf25 homolog.